A 376-amino-acid polypeptide reads, in one-letter code: Lipid-A-disaccharide synthase (376 aa).

It belongs to the LpxB family.

The enzyme catalyses a lipid X + a UDP-2-N,3-O-bis[(3R)-3-hydroxyacyl]-alpha-D-glucosamine = a lipid A disaccharide + UDP + H(+). Its pathway is bacterial outer membrane biogenesis; LPS lipid A biosynthesis. In terms of biological role, condensation of UDP-2,3-diacylglucosamine and 2,3-diacylglucosamine-1-phosphate to form lipid A disaccharide, a precursor of lipid A, a phosphorylated glycolipid that anchors the lipopolysaccharide to the outer membrane of the cell. The chain is Lipid-A-disaccharide synthase from Coxiella burnetii (strain CbuG_Q212) (Coxiella burnetii (strain Q212)).